A 736-amino-acid chain; its full sequence is DNA topoisomerase 1 (736 aa).

The Toprim domain maps to 2–113 (KHLIIVESPA…SYPRIVFHEI (112 aa)). 2 residues coordinate Mg(2+): Glu-8 and Asp-82. Residues 129–552 (DMFKVNAQQA…DFYYPFMDKI (424 aa)) form the Topo IA-type catalytic domain. The interval 163 to 168 (SAGRVQ) is interaction with DNA. Residue Tyr-297 is the O-(5'-phospho-DNA)-tyrosine intermediate of the active site. 4 C4-type zinc fingers span residues 572–598 (CPKCGGELVKKNSRYGEFIACNNYPKC), 616–642 (CEKCGGEMVQKFSRNGAFLACNNYPEC), 663–689 (CPECGGDIALKRSKKGSFYGCNNYPKC), and 702–725 (CEKCHYLMSERIYRKKKAHECIQC).

It belongs to the type IA topoisomerase family. Monomer. The cofactor is Mg(2+).

It carries out the reaction ATP-independent breakage of single-stranded DNA, followed by passage and rejoining.. Functionally, releases the supercoiling and torsional tension of DNA, which is introduced during the DNA replication and transcription, by transiently cleaving and rejoining one strand of the DNA duplex. Introduces a single-strand break via transesterification at a target site in duplex DNA. The scissile phosphodiester is attacked by the catalytic tyrosine of the enzyme, resulting in the formation of a DNA-(5'-phosphotyrosyl)-enzyme intermediate and the expulsion of a 3'-OH DNA strand. The free DNA strand then undergoes passage around the unbroken strand, thus removing DNA supercoils. Finally, in the religation step, the DNA 3'-OH attacks the covalent intermediate to expel the active-site tyrosine and restore the DNA phosphodiester backbone. The polypeptide is DNA topoisomerase 1 (Helicobacter pylori (strain J99 / ATCC 700824) (Campylobacter pylori J99)).